The following is a 508-amino-acid chain: Lysine--tRNA ligase (508 aa).

Residues Glu-416 and Glu-423 each coordinate Mg(2+).

It belongs to the class-II aminoacyl-tRNA synthetase family. In terms of assembly, homodimer. The cofactor is Mg(2+).

The protein localises to the cytoplasm. It carries out the reaction tRNA(Lys) + L-lysine + ATP = L-lysyl-tRNA(Lys) + AMP + diphosphate. In Prochlorococcus marinus (strain MIT 9303), this protein is Lysine--tRNA ligase.